Here is a 267-residue protein sequence, read N- to C-terminus: uncharacterized protein (267 aa).

The tract at residues 58–90 is disordered; sequence RHTDDKQEKNQNEGEDNQKGENKTTDQQDGPKK. Transmembrane regions (helical) follow at residues 101-121 and 226-246; these read IYVL…LSQM and GMTT…AWLG.

It is found in the membrane. This is an uncharacterized protein from Caenorhabditis elegans.